Reading from the N-terminus, the 797-residue chain is G-patch domain-containing protein C1486.03 (797 aa).

Polar residues predominate over residues 1–12 (MQNEYVDMNSSS). Disordered stretches follow at residues 1-33 (MQNE…FRGQ) and 159-204 (VRER…SSEE). The G-patch domain maps to 115-161 (TTGFGAKMLEKMGYKQGQGLGANAEGIAEPVQSKLRPERVGLGAVRE). The span at 159 to 185 (VRERTEKQRKEAIARGEISDSEDEKHT) shows a compositional bias: basic and acidic residues. Basic residues predominate over residues 186–199 (VKQKPLREKKKKPL).

This sequence belongs to the TFP11/STIP family.

The protein localises to the cytoplasm. It localises to the cytoskeleton. It is found in the microtubule organizing center. The protein resides in the spindle pole body. This chain is G-patch domain-containing protein C1486.03, found in Schizosaccharomyces pombe (strain 972 / ATCC 24843) (Fission yeast).